Here is a 264-residue protein sequence, read N- to C-terminus: LIMR family protein SELMODRAFT_416716 (264 aa).

A run of 4 helical transmembrane segments spans residues 23–43 (VVIL…VIGY), 96–116 (ILFT…LIFA), 194–214 (IIWL…FPFL), and 225–245 (WGLL…MSVI).

It belongs to the LIMR family.

The protein resides in the membrane. This is LIMR family protein SELMODRAFT_416716 from Selaginella moellendorffii (Spikemoss).